Consider the following 273-residue polypeptide: Ethanolamine ammonia-lyase small subunit (273 aa).

Adenosylcob(III)alamin is bound by residues valine 164, glutamate 185, and cysteine 214.

This sequence belongs to the EutC family. As to quaternary structure, the basic unit is a heterodimer which dimerizes to form tetramers. The heterotetramers trimerize; 6 large subunits form a core ring with 6 small subunits projecting outwards. The cofactor is adenosylcob(III)alamin.

It is found in the bacterial microcompartment. It catalyses the reaction ethanolamine = acetaldehyde + NH4(+). It participates in amine and polyamine degradation; ethanolamine degradation. Its function is as follows. Catalyzes the deamination of various vicinal amino-alcohols to oxo compounds. Allows this organism to utilize ethanolamine as the sole source of nitrogen and carbon in the presence of external vitamin B12. This Pseudomonas paraeruginosa (strain DSM 24068 / PA7) (Pseudomonas aeruginosa (strain PA7)) protein is Ethanolamine ammonia-lyase small subunit.